We begin with the raw amino-acid sequence, 781 residues long: Catenin beta-1 (781 aa).

Residue Ala-2 is modified to N-acetylalanine. Residues Ala-2 to Ser-23 form an interaction with VCL region. At Ser-23 the chain carries Phosphoserine; by GSK3-beta; alternate. A glycan (O-linked (GlcNAc) serine; alternate) is linked at Ser-23. Ser-29 is modified (phosphoserine; by GSK3-beta). A phosphoserine; by GSK3-beta and HIPK2 mark is found at Ser-33 and Ser-37. Positions Gly-34–Val-57 are disordered. Position 41 is a phosphothreonine; by GSK3-beta (Thr-41). At Ser-45 the chain carries Phosphoserine. Lys-49 is subject to N6-acetyllysine. Tyr-64 carries the post-translational modification Phosphotyrosine; by PTK6. Position 142 is a phosphotyrosine; by FYN and PTK6 (Tyr-142). ARM repeat units follow at residues Arg-151–Ser-191, Gln-193–Ser-234, Gly-235–Ala-276, Gly-277–Ser-318, Gly-319–Ala-360, Gly-361–Ser-389, Gly-400–Val-441, Gly-442–Ala-484, Tyr-489–Gln-530, Gly-531–Glu-571, Asn-594–Ala-636, and Thr-637–Lys-666. Residues Leu-156 to Leu-178 are interaction with BCL9. Ser-191 bears the Phosphoserine mark. Ser-246 bears the Phosphoserine; by CDK5 mark. Phosphotyrosine is present on residues Tyr-331 and Tyr-333. Position 552 is a phosphoserine; by AMPK (Ser-552). Thr-556 carries the phosphothreonine modification. Cys-619 carries the post-translational modification S-nitrosocysteine. Ser-675 bears the Phosphoserine mark. The disordered stretch occupies residues His-720–Leu-781. Over residues Met-734–Gly-745 the composition is skewed to basic and acidic residues. The tract at residues Asn-772–Leu-781 is interaction with SCRIB.

It belongs to the beta-catenin family. In terms of assembly, two separate complex-associated pools are found in the cytoplasm. The majority is present as component of an E-cadherin/ catenin adhesion complex composed of at least E-cadherin/CDH1 and beta-catenin/CTNNB1, and possibly alpha-catenin/CTNNA1; the complex is located to adherens junctions. The stable association of CTNNA1 is controversial as CTNNA1 was shown not to bind to F-actin when assembled in the complex. Alternatively, the CTNNA1-containing complex may be linked to F-actin by other proteins such as LIMA1. Binds NHERF1. Interacts with PTPRU (via the cytoplasmic juxtamembrane domain) and with EMD. Interacts with SESTD1 and TRPC4. Interacts with CAV1. Interacts with PTPRJ. Interacts with PKT7. Interacts with FAT1 (via the cytoplasmic domain). Interacts with CDK2, NDRG2 and NANOS1. Interacts with NEK2 and CDK5. Interacts with CARM1, CXADR, PCDH11Y and PTK6. Interacts with RAPGEF2. Interacts with SOX7; this interaction may lead to proteasomal degradation of active CTNNB1 and thus inhibition of Wnt/beta-catenin-stimulated transcription. Identified in a complex with HINT1 and MITF. Interacts with FHIT. Interacts with FERMT2. Identified in a complex with TCF4 and FERMT2. Another cytoplasmic pool is part of a large complex containing AXIN1, AXIN2, APC, CSNK1A1 and GSK3B that promotes phosphorylation on N-terminal Ser and Thr residues and ubiquitination of CTNNB1 via BTRC and its subsequent degradation by the proteasome. Wnt-dependent activation of DVL antagonizes the action of GSK3B. When GSK3B activity is inhibited the complex dissociates, CTNNB1 is dephosphorylated and is no longer targeted for destruction. The stabilized protein translocates to the nucleus, where it binds TCF/LEF-1 family members, BCL9, BCL9L and possibly also RUVBL1 and CHD8. Interacts with TAX1BP3 (via the PDZ domain); this interaction inhibits the transcriptional activity of CTNNB1. Interacts with AJAP1, BAIAP1 and CTNNA3. Interacts with TRPV4; the TRPV4 and CTNNB1 complex can interact with CDH1. Interacts with VCL. The CTNNB1 and TCF4 complex interacts with PML. Interacts with XIRP1. Binds CTNNBIP and EP300. CTNNB1 forms a ternary complex with LEF1 and EP300 that is disrupted by CTNNBIP1 binding. Interacts directly with AXIN1; the interaction is regulated by CDK2 phosphorylation of AXIN1. Interacts with GLIS2. Interacts with SCRIB. Interacts with TNIK and TCF7L2. Interacts with SLC30A9. Interacts with RORA. May interact with P-cadherin/CDH3. Interacts with RNF220. Interacts with CTNND2. Interacts (via the C-terminal region) with CBY1. The complex composed, at least, of APC, CTNNB1 and GSK3B interacts with JPT1; the interaction requires the inactive form of GSK3B (phosphorylated at 'Ser-9'). Interacts with DLG5. Interacts with FAM53B; promoting translocation to the nucleus. Interacts with TMEM170B. Interacts with AHI1. Interacts with GID8. Component of an cadherin:catenin adhesion complex composed of at least of CDH26, beta-catenin/CTNNB1, alpha-catenin/CTNNA1 and p120 catenin/CTNND1. Forms a complex comprising APPL1, RUVBL2, APPL2, HDAC1 and HDAC2. Interacts with IRF2BPL; mediates the ubiquitination and degradation of CTNNB1. Interacts with AMFR. Interacts with LMBR1L. Interacts with SOX30; prevents interaction of CTNNB1 with TCF7L2/TCF4 and leads to inhibition of Wnt signaling. Interacts with SOX9; inhibiting CTNNB1 activity by competing with the binding sites of TCF/LEF within CTNNB1, thereby inhibiting the Wnt signaling. Interacts with SPN/CD43 cytoplasmic tail. Interacts (when phosphorylated at Tyr-333) with isoform M2 of PKM (PKM2); promoting transcription activation. Interacts with PKP2 (via HEAD domain). Interacts with CDH1. Interacts (when unphosphorylated) with FLYWCH1, perhaps preventing interaction of CTNNB1 with TCF4, and thereby regulating transcription activation; phosphorylation of CTNNB1 may inhibit the interaction. Interacts (via the central armadillo domains) with probable transcriptional regulator ADNP (via N-terminal region); interaction is direct and stabilizes CTNNB1 by modulating its phosphorylation by glycogen synthase kinase-3 beta GSK3B. Interacts with NR5A2. Interacts with DSG2; the interaction promotes localization of CTNNB1 at cell junctions thus reducing its nuclear localization and subsequent transcription of CTNNB1/TCF-target genes. In terms of processing, phosphorylation at Ser-552 by AMPK promotes stabilization of the protein, enhancing TCF/LEF-mediated transcription. Phosphorylation by GSK3B requires prior phosphorylation of Ser-45 by another kinase. Phosphorylation proceeds then from Thr-41 to Ser-37 and Ser-33. Phosphorylated by NEK2. EGF stimulates tyrosine phosphorylation. Phosphorylated on Ser-33 and Ser-37 by HIPK2 and GSK3B, this phosphorylation triggers proteasomal degradation. Phosphorylation on Ser-191 and Ser-246 by CDK5. Phosphorylation by CDK2 regulates insulin internalization. Phosphorylation by PTK6 at Tyr-64, Tyr-142, Tyr-331 and/or Tyr-333 with the predominant site at Tyr-64 is not essential for inhibition of transcriptional activity. Phosphorylation by SRC at Tyr-333 promotes interaction with isoform M2 of PKM (PKM2); promoting transcription activation. Post-translationally, ubiquitinated by the SCF(BTRC) E3 ligase complex when phosphorylated by GSK3B, leading to its degradation. Ubiquitinated by a E3 ubiquitin ligase complex containing UBE2D1, SIAH1, CACYBP/SIP, SKP1, APC and TBL1X, leading to its subsequent proteasomal degradation. Ubiquitinated and degraded following interaction with SOX9. Ubiquitinated via 'Lys-11'- and 'Lys-29'-linked ubiquitin chains by UBR5, leading to its stabilization. S-nitrosylation at Cys-619 within adherens junctions promotes VEGF-induced, NO-dependent endothelial cell permeability by disrupting interaction with E-cadherin, thus mediating disassembly adherens junctions. In terms of processing, O-glycosylation at Ser-23 decreases nuclear localization and transcriptional activity, and increases localization to the plasma membrane and interaction with E-cadherin CDH1. Post-translationally, deacetylated at Lys-49 by SIRT1. Expressed in cerebellar granule neurons (at protein level). Expressed in the intestinal epithelium (at protein level). Abundantly expressed in the tooth, skin, lung, kidney, eye and brain with weak expression in the liver and heart.

Its subcellular location is the cytoplasm. The protein localises to the nucleus. It is found in the cytoskeleton. It localises to the cell junction. The protein resides in the adherens junction. Its subcellular location is the cell membrane. The protein localises to the microtubule organizing center. It is found in the centrosome. It localises to the spindle pole. The protein resides in the synapse. Its subcellular location is the cilium basal body. Key downstream component of the canonical Wnt signaling pathway. In the absence of Wnt, forms a complex with AXIN1, AXIN2, APC, CSNK1A1 and GSK3B that promotes phosphorylation on N-terminal Ser and Thr residues and ubiquitination of CTNNB1 via BTRC and its subsequent degradation by the proteasome. In the presence of Wnt ligand, CTNNB1 is not ubiquitinated and accumulates in the nucleus, where it acts as a coactivator for transcription factors of the TCF/LEF family, leading to activate Wnt responsive genes. Also acts as a coactivator for other transcription factors, such as NR5A2. Promotes epithelial to mesenchymal transition/mesenchymal to epithelial transition (EMT/MET) via driving transcription of CTNNB1/TCF-target genes. Involved in the regulation of cell adhesion, as component of an E-cadherin:catenin adhesion complex. Acts as a negative regulator of centrosome cohesion. Involved in the CDK2/PTPN6/CTNNB1/CEACAM1 pathway of insulin internalization. Blocks anoikis of malignant kidney and intestinal epithelial cells and promotes their anchorage-independent growth by down-regulating DAPK2. Disrupts PML function and PML-NB formation by inhibiting RANBP2-mediated sumoylation of PML. Promotes neurogenesis by maintaining sympathetic neuroblasts within the cell cycle. Involved in chondrocyte differentiation via interaction with SOX9: SOX9-binding competes with the binding sites of TCF/LEF within CTNNB1, thereby inhibiting the Wnt signaling. Acts as a positive regulator of odontoblast differentiation during mesenchymal tooth germ formation, via promoting the transcription of differentiation factors such as LEF1, BMP2 and BMP4. Activity is repressed in a MSX1-mediated manner at the bell stage of mesenchymal tooth germ formation which prevents premature differentiation of odontoblasts. This Mus musculus (Mouse) protein is Catenin beta-1.